A 282-amino-acid chain; its full sequence is NAD(P)H-hydrate epimerase (282 aa).

Residues Met-1 to Tyr-53 constitute a mitochondrion transit peptide. Ser-43 is subject to Phosphoserine; by PKA. The YjeF N-terminal domain occupies Ala-59–Leu-269. Residue Asn-113–Asp-117 participates in (6S)-NADPHX binding. Asn-114 lines the K(+) pocket. Lys-138 bears the N6-succinyllysine mark. Residue Asp-179 participates in K(+) binding. (6S)-NADPHX is bound by residues Gly-183–Asp-189 and Asp-212. Ser-215 provides a ligand contact to K(+).

The protein belongs to the NnrE/AIBP family. In terms of assembly, homodimer. Interacts with APOA1 and APOA2. K(+) serves as cofactor. Post-translationally, undergoes physiological phosphorylation during sperm capacitation, downstream to PKA activation. As to expression, detected in testis and sperm (at protein level). Expressed at high levels in heart, liver, kidney, and testis.

It localises to the mitochondrion. The protein localises to the secreted. The enzyme catalyses (6R)-NADHX = (6S)-NADHX. It catalyses the reaction (6R)-NADPHX = (6S)-NADPHX. Its function is as follows. Catalyzes the epimerization of the S- and R-forms of NAD(P)HX, a damaged form of NAD(P)H that is a result of enzymatic or heat-dependent hydration. This is a prerequisite for the S-specific NAD(P)H-hydrate dehydratase to allow the repair of both epimers of NAD(P)HX. Accelerates cholesterol efflux from endothelial cells to high-density lipoprotein (HDL) and thereby regulates angiogenesis. The sequence is that of NAD(P)H-hydrate epimerase from Mus musculus (Mouse).